Here is a 663-residue protein sequence, read N- to C-terminus: Protein KINESIN LIGHT CHAIN-RELATED 2 (663 aa).

The span at 1 to 14 (MDVGESNERVKDDS) shows a compositional bias: basic and acidic residues. 2 disordered regions span residues 1–24 (MDVGESNERVKDDSALQASPRSPL) and 86–146 (GESK…KVSV). S19 is modified (phosphoserine). Positions 86–100 (GESKKEIILEKKEES) are enriched in basic and acidic residues. Positions 102–111 (GEGSLSQKKP) are enriched in polar residues. TPR repeat units follow at residues 147-181 (DEESPELGVVLLKQARELVSSGENLNKALDLALRA), 200-233 (VMSLHILAAIYAGLGRYNDAVPVLERSIEIPMIE), 243-276 (FAGCMQLGDMYGLMGQVENSIMLYTAGLEIQRQV), 285-318 (GETCRYLAEAHVQAMQFEEASRLCQMALDIHKEN), 329-363 (AADRKLMGLICDAKGDYEVALEHYVLASMAMSSQN), 369-402 (AAVDCSIGDAYMSLARFDEAIFAYQKALAVFKQG), 411-444 (ALVYVRLADLYNKIGKTRDSKSYCENALKIYLKP), 454-487 (ATGFIEISAIYQSMNELDQALKLLRRALKIYANA), 495-528 (AGIEAQMGVVTYMMGNYSESYDIFKSAISKFRNS), 537-570 (GIALNQMGLACVQRYAINEAADLFEEAKTILEKE), and 579-612 (LAVYSNLAGTYDAMGRLDDAIEILEYVVGTREEK).

It belongs to the kinesin light chain family.

This Arabidopsis thaliana (Mouse-ear cress) protein is Protein KINESIN LIGHT CHAIN-RELATED 2.